Consider the following 381-residue polypeptide: L-lactate dehydrogenase (381 aa).

The FMN hydroxy acid dehydrogenase domain maps to 1–380 (MIISASTDYR…TRDSLVRELG (380 aa)). Tyr24 serves as a coordination point for substrate. FMN contacts are provided by Ser106 and Gln127. Position 129 (Tyr129) interacts with substrate. Thr155 lines the FMN pocket. Arg164 contributes to the substrate binding site. Lys251 serves as a coordination point for FMN. The Proton acceptor role is filled by His275. Residue Arg278 participates in substrate binding. An FMN-binding site is contributed by 306–330 (DSGIRSGLDVVRMIALGADTVLIGR).

Belongs to the FMN-dependent alpha-hydroxy acid dehydrogenase family. In terms of assembly, homotetramer. It depends on FMN as a cofactor.

The protein localises to the cell inner membrane. The catalysed reaction is (S)-lactate + A = pyruvate + AH2. Catalyzes the conversion of L-lactate to pyruvate. Is coupled to the respiratory chain. This chain is L-lactate dehydrogenase, found in Pseudomonas putida (strain GB-1).